The primary structure comprises 163 residues: Phosphopantetheine adenylyltransferase (163 aa).

Residue S10 coordinates substrate. Residues 10-11 and H18 contribute to the ATP site; that span reads SF. Residues K42, L74, and R88 each coordinate substrate. ATP contacts are provided by residues 89 to 91, E99, and 124 to 130; these read GLR and YSFLSSS.

The protein belongs to the bacterial CoaD family. As to quaternary structure, homohexamer. It depends on Mg(2+) as a cofactor.

It is found in the cytoplasm. It catalyses the reaction (R)-4'-phosphopantetheine + ATP + H(+) = 3'-dephospho-CoA + diphosphate. It functions in the pathway cofactor biosynthesis; coenzyme A biosynthesis; CoA from (R)-pantothenate: step 4/5. Reversibly transfers an adenylyl group from ATP to 4'-phosphopantetheine, yielding dephospho-CoA (dPCoA) and pyrophosphate. The polypeptide is Phosphopantetheine adenylyltransferase (Bacillus anthracis (strain A0248)).